A 220-amino-acid polypeptide reads, in one-letter code: Claudin-22 (220 aa).

Residues 1–10 lie on the Cytoplasmic side of the membrane; that stretch reads MGLVFRTATQ. Residues 11–31 form a helical membrane-spanning segment; it reads AAALLLSLLGWVLSCLTNYLP. The Extracellular portion of the chain corresponds to 32–81; that stretch reads HWKNLNLELNEMENWTMGLWKSCVIQEEVGRQCKDFDSFLALPAELQVSR. The chain crosses the membrane as a helical span at residues 82–102; the sequence is VLMSLCNGLGLLGLLASGCGL. The Cytoplasmic portion of the chain corresponds to 103 to 120; that stretch reads DCLRLGETQEGLKKRLLT. Residues 121–141 form a helical membrane-spanning segment; it reads LGGTLLWTSGVMVLVPVSWVA. Residues 142–164 lie on the Extracellular side of the membrane; the sequence is HKTVREFWDETMPEIVPRWEFGE. A helical transmembrane segment spans residues 165 to 185; it reads ALFLGWFAGFCLVLGGCVLHC. The Cytoplasmic segment spans residues 186 to 220; that stretch reads AACWSPAPAASSHYAVAGPRDHQQHLELKQANPEI.

The protein belongs to the claudin family.

It localises to the cell junction. It is found in the tight junction. The protein localises to the cell membrane. Plays a major role in tight junction-specific obliteration of the intercellular space, through calcium-independent cell-adhesion activity. In Mus musculus (Mouse), this protein is Claudin-22 (Cldn22).